Here is a 205-residue protein sequence, read N- to C-terminus: Colicin-E8 (205 aa).

Disordered stretches follow at residues Ala24–Ile109 and Pro136–Met187. Composition is skewed to basic and acidic residues over residues Gln53–Arg76, Pro88–Lys99, and Arg159–Ile178. Residues His173, His198, and His202 each coordinate Zn(2+).

The protein belongs to the colicin/pyosin nuclease family.

This plasmid-coded bactericidal protein is an endonuclease active on both single- and double-stranded DNA but with undefined specificity. Its function is as follows. Colicins are polypeptide toxins produced by and active against E.coli and closely related bacteria. The sequence is that of Colicin-E8 (col) from Escherichia coli.